A 338-amino-acid chain; its full sequence is Fructose-1,6-bisphosphatase class 1 (338 aa).

The Mg(2+) site is built by glutamate 91, aspartate 113, leucine 115, and aspartate 116. Substrate-binding positions include 116-119 (DGSS), asparagine 208, and lysine 274. Glutamate 280 contacts Mg(2+).

It belongs to the FBPase class 1 family. In terms of assembly, homotetramer. Mg(2+) is required as a cofactor.

It localises to the cytoplasm. It catalyses the reaction beta-D-fructose 1,6-bisphosphate + H2O = beta-D-fructose 6-phosphate + phosphate. The protein operates within carbohydrate biosynthesis; gluconeogenesis. The protein is Fructose-1,6-bisphosphatase class 1 of Ralstonia nicotianae (strain ATCC BAA-1114 / GMI1000) (Ralstonia solanacearum).